Consider the following 325-residue polypeptide: Probable ABC transporter permease YtrD (325 aa).

8 helical membrane passes run 16–36, 63–83, 113–133, 146–166, 179–199, 233–253, 272–292, and 298–318; these read VALV…ILNM, SSFI…QLGI, MVIV…IMLL, LGMI…GALT, VAIS…ILFG, YLVI…ISFV, PVQI…GFTA, and GYLI…YFAI.

This sequence belongs to the ABC-5 integral membrane protein family. As to quaternary structure, the complex is composed of 2 ATP-binding proteins (YtrB and YtrE), 2 transmembrane proteins (YtrC and YtrD) and a solute-binding protein (YtrF).

It is found in the cell membrane. Functionally, part of the ABC transporter complex YtrBCDEF that plays a role in acetoin utilization during stationary phase and sporulation. The chain is Probable ABC transporter permease YtrD (ytrD) from Bacillus subtilis (strain 168).